Consider the following 409-residue polypeptide: Bone morphogenetic protein 4 (409 aa).

Residues 1-19 (MIPGNRMLMVVLLCQVLLG) form the signal peptide. The propeptide occupies 20 to 293 (GASHASLIPE…ALTRRRRAKR (274 aa)). Position 91 is a phosphoserine (Ser-91). The segment at 91-110 (SGEEEEEEQMPSGGLEYPER) is disordered. 4 N-linked (GlcNAc...) asparagine glycosylation sites follow: Asn-144, Asn-209, Asn-351, and Asn-366. 3 disulfide bridges follow: Cys-309–Cys-374, Cys-338–Cys-406, and Cys-342–Cys-408.

This sequence belongs to the TGF-beta family. As to quaternary structure, homodimer; disulfide-linked. Interacts with GREM2. Part of a complex consisting of TWSG1 and CHRD. Interacts with the serine proteases, HTRA1 and HTRA3; the interaction with either inhibits BMP4-mediated signaling. The HTRA protease activity is required for this inhibition. Interacts with SOSTDC1. Interacts with FBN1 (via N-terminal domain) and FBN2. Interacts with type I receptor BMPR1A. Interacts with type II receptor BMPR2. Interacts with FSTL1; this interaction inhibits the activation of the BMP4/Smad1/5/8 signaling pathway. Interacts with SCUBE3. Interacts with TGFBR3.

The protein localises to the secreted. Its subcellular location is the extracellular space. It is found in the extracellular matrix. In terms of biological role, growth factor of the TGF-beta superfamily that plays essential roles in many developmental processes, including neurogenesis, vascular development, angiogenesis and osteogenesis. Acts in concert with PTHLH/PTHRP to stimulate ductal outgrowth during embryonic mammary development and to inhibit hair follicle induction. Initiates the canonical BMP signaling cascade by associating with type I receptor BMPR1A and type II receptor BMPR2. Once all three components are bound together in a complex at the cell surface, BMPR2 phosphorylates and activates BMPR1A. In turn, BMPR1A propagates signal by phosphorylating SMAD1/5/8 that travel to the nucleus and act as activators and repressors of transcription of target genes. Positively regulates the expression of odontogenic development regulator MSX1 via inducing the IPO7-mediated import of SMAD1 to the nucleus. Required for MSX1-mediated mesenchymal molar tooth bud development beyond the bud stage, via promoting Wnt signaling. Acts as a positive regulator of odontoblast differentiation during mesenchymal tooth germ formation, expression is repressed during the bell stage by MSX1-mediated inhibition of CTNNB1 signaling. Able to induce its own expression in dental mesenchymal cells and also in the neighboring dental epithelial cells via an MSX1-mediated pathway. Can also signal through non-canonical BMP pathways such as ERK/MAP kinase, PI3K/Akt, or SRC cascades. For example, induces SRC phosphorylation which, in turn, activates VEGFR2, leading to an angiogenic response. This Oryctolagus cuniculus (Rabbit) protein is Bone morphogenetic protein 4 (BMP4).